The primary structure comprises 458 residues: Tissue-resident T-cell transcription regulator protein ZNF683 (458 aa).

Disordered regions lie at residues 84 to 109 and 249 to 275; these read PQDLGEDASNMRHQPPSLYKASTDSE and TLHSQVESRSSRDTRTPGQAGVAAPTR. 3 consecutive C2H2-type zinc fingers follow at residues 301–323, 329–351, and 357–379; these read YECNVCGKNFGQLSNLKVHLRVH, FQCALCQKRFTQLAHLQKHHLVH, and HQCQVCHKRFSSSSNLKTHLRLH.

It belongs to the krueppel C2H2-type zinc-finger protein family. In terms of tissue distribution, expressed in tissue-resident memory T (Trm) cell population in non-lymphoid organs, such as skin and gut. Expressed in innate lymphocytes, including tissue-resident natural killer (trNK) and natural killer T (NKT) cells in thymus, spleen and liver.

Its subcellular location is the nucleus. Its function is as follows. Transcription factor that mediates a transcriptional program in various innate and adaptive immune tissue-resident lymphocyte T-cell types such as tissue-resident memory T (Trm), natural killer (trNK) and natural killer T (NKT) cells and negatively regulates gene expression of proteins that promote the egress of tissue-resident T-cell populations from non-lymphoid organs. Plays a role in the development, retention and long-term establishment of adaptive and innate tissue-resident lymphocyte T-cell types in non-lymphoid organs, such as the skin and gut, but also in other nonbarrier tissues like liver and kidney, and therefore may provide immediate immunological protection against reactivating infections or viral reinfection. Also plays a role in the differentiation of both thymic and peripheral NKT cells. Negatively regulates the accumulation of interferon-gamma (IFN-gamma) in NKT cells at steady state or after antigenic stimulation. Positively regulates granzyme B production in NKT cells after innate stimulation. Associates with the transcriptional repressor PRDM1/BLIMP1 to chromatin at gene promoter regions. This chain is Tissue-resident T-cell transcription regulator protein ZNF683, found in Mus musculus (Mouse).